The following is a 315-amino-acid chain: Nucleotide-binding protein PsycPRwf_2129 (315 aa).

29 to 36 (GRSGSGKT) provides a ligand contact to ATP. GTP is bound at residue 79–82 (DIRT).

It belongs to the RapZ-like family.

Its function is as follows. Displays ATPase and GTPase activities. The protein is Nucleotide-binding protein PsycPRwf_2129 of Psychrobacter sp. (strain PRwf-1).